The chain runs to 606 residues: NADH-ubiquinone oxidoreductase chain 5 (606 aa).

The next 16 helical transmembrane spans lie at 1–21 (MNPF…PIMM), 43–63 (AFTL…EMII), 87–107 (VMFI…SMWY), 112–132 (PFIN…MILV), 137–157 (LFQL…LIGW), 171–191 (AILY…WFLT), 213–233 (LIGL…HPWL), 241–261 (TPVS…FLLI), 273–293 (VQTM…LCAI), 301–321 (IVAF…GINQ), 324–344 (LAFL…MCSG), 366–386 (MPFT…MPYL), 407–429 (WALL…IIFF), 457–477 (LLIG…PMTV), 482–502 (MPLY…MLAL), and 582–602 (GLIK…MTLF).

It belongs to the complex I subunit 5 family. Core subunit of respiratory chain NADH dehydrogenase (Complex I) which is composed of 45 different subunits.

The protein localises to the mitochondrion inner membrane. It carries out the reaction a ubiquinone + NADH + 5 H(+)(in) = a ubiquinol + NAD(+) + 4 H(+)(out). Core subunit of the mitochondrial membrane respiratory chain NADH dehydrogenase (Complex I) which catalyzes electron transfer from NADH through the respiratory chain, using ubiquinone as an electron acceptor. Essential for the catalytic activity and assembly of complex I. The protein is NADH-ubiquinone oxidoreductase chain 5 (MT-ND5) of Sus scrofa (Pig).